A 1025-amino-acid chain; its full sequence is Multidrug resistance protein MdtC (1025 aa).

Helical transmembrane passes span 3-23, 333-353, 360-380, 387-407, 431-451, 463-483, 528-548, 853-873, 875-895, 897-917, 953-973, and 984-1004; these read FFALFIYRPVATILLSVAITL, EVEQTLIISVALVILVVFLFL, IIPAVAVPVSLIGTFAAMYLC, LSLMALTIATGFVVDDAIVVL, VGFTVLSMSLSLVAVFLPLLL, FAVTLSVAIGISLLVSLTLTP, LVGVVLLGTIALNIWLYISIP, VILIIAAIATVYIVLGILYES, VHPLTILSTLPSAGVGALLAL, LFNAPFSLIALIGIMLLIGIV, PIMMTTLAALFGALPLVLSGG, and ITIVGGLVMSQLLTLYTTPVV.

Belongs to the resistance-nodulation-cell division (RND) (TC 2.A.6) family. MdtC subfamily. In terms of assembly, part of a tripartite efflux system composed of MdtA, MdtB and MdtC. MdtC forms a heteromultimer with MdtB.

The protein localises to the cell inner membrane. The chain is Multidrug resistance protein MdtC from Shigella boydii serotype 4 (strain Sb227).